We begin with the raw amino-acid sequence, 427 residues long: Glutamyl-tRNA(Gln) amidotransferase subunit D (427 aa).

Positions 1–18 (MTADPGDRVRVTHGDASH) are enriched in basic and acidic residues. Residues 1-20 (MTADPGDRVRVTHGDASHEG) are disordered. Residues 80–413 (PTIALISTGG…DDPEAAMQES (334 aa)) form the Asparaginase/glutaminase domain. Active-site residues include Thr-90, Thr-166, Asp-167, and Lys-243.

This sequence belongs to the asparaginase 1 family. GatD subfamily. Heterodimer of GatD and GatE.

It catalyses the reaction L-glutamyl-tRNA(Gln) + L-glutamine + ATP + H2O = L-glutaminyl-tRNA(Gln) + L-glutamate + ADP + phosphate + H(+). Functionally, allows the formation of correctly charged Gln-tRNA(Gln) through the transamidation of misacylated Glu-tRNA(Gln) in organisms which lack glutaminyl-tRNA synthetase. The reaction takes place in the presence of glutamine and ATP through an activated gamma-phospho-Glu-tRNA(Gln). The GatDE system is specific for glutamate and does not act on aspartate. The protein is Glutamyl-tRNA(Gln) amidotransferase subunit D of Halobacterium salinarum (strain ATCC 29341 / DSM 671 / R1).